We begin with the raw amino-acid sequence, 370 residues long: Adaptive-response sensory kinase SasA (370 aa).

A Histidine kinase domain is found at 152–365; the sequence is MVAHELRTPL…CFYLTVPVWQ (214 aa). H155 carries the post-translational modification Phosphohistidine; by autocatalysis.

As to quaternary structure, homooligomerizes. Interacts with KaiC. Participates in the KaiBC complex, whose core is composed of a KaiC homohexamer and 6 KaiB.

The enzyme catalyses ATP + protein L-histidine = ADP + protein N-phospho-L-histidine.. Its function is as follows. Member of the two-component regulatory system SasA/RpaA involved in genome-wide circadian gene expression. One of several clock output pathways. Participates in the Kai clock protein complex, the main circadian regulator in cyanobacteria, via its interaction with KaiC. KaiC enhances the autophosphorylation activity of SasA, which then transfers its phosphate group to RpaA to activate it. In addition to its output function, recruits fold-shifted KaiB (KaiB(fs)) to KaiC to cooperatively form the KaiB(6):KaiC(6) complex (independent of SasA kinase activity). Required for robustness of the circadian rhythm of gene expression and is involved in clock output, also required for adaptation to light/dark cycles. In Prochlorococcus marinus (strain MIT 9303), this protein is Adaptive-response sensory kinase SasA.